The following is a 901-amino-acid chain: Putative receptor protein kinase CRINKLY4 (901 aa).

Residues 1 to 24 form the signal peptide; that stretch reads MDHVPALVLAGCCFLALLPGWACG. Residues 25 to 423 are Extracellular-facing; it reads LGSMSSIAVS…SRKLMAFQMR (399 aa). 7 consecutive repeat copies span residues 33 to 68, 72 to 107, 125 to 160, 162 to 195, 203 to 236, 253 to 287, and 292 to 330. Residues 33–330 form a 7 X 36 AA repeats region; that stretch reads VSYGEDGPVF…PLALPMAVPP (298 aa). N-linked (GlcNAc...) asparagine glycans are attached at residues asparagine 151 and asparagine 179. Asparagine 282 carries an N-linked (GlcNAc...) asparagine glycan. Disulfide bonds link cysteine 338-cysteine 365, cysteine 368-cysteine 382, and cysteine 372-cysteine 390. One copy of the TNFR-Cys repeat lies at 357 to 391; it reads CKPANSRLCLPCSTGCPEGLYESSPCNATADRVCQ. Asparagine 383 is a glycosylation site (N-linked (GlcNAc...) asparagine). Residues 424–444 traverse the membrane as a helical segment; sequence IFVAEIVFAVVLVLSVSVTTC. Over 445 to 901 the chain is Cytoplasmic; that stretch reads LYVRHKLRHC…QENLYLQHNF (457 aa). Residues 505–712 form the Protein kinase domain; sequence FSEDSQVGKG…EILSGRKAID (208 aa). ATP-binding positions include 511–519 and lysine 533; that span reads VGKGSFSCV. The Proton acceptor role is filled by aspartate 634. Residues 845–876 form a disordered region; sequence VTSSQRRKSSASEADIVGRRATDGRNVGSSIG.

It belongs to the protein kinase superfamily. Ser/Thr protein kinase family. As to quaternary structure, homodimer.

Its subcellular location is the cell membrane. It is found in the endosome. It localises to the multivesicular body membrane. The catalysed reaction is L-seryl-[protein] + ATP = O-phospho-L-seryl-[protein] + ADP + H(+). The enzyme catalyses L-threonyl-[protein] + ATP = O-phospho-L-threonyl-[protein] + ADP + H(+). Putative receptor protein kinase. Could play a role in a differentiation signal. The CRINKLY4 (CR4) mutation affects leaf epidermis differentiation such that cell size and morphology are altered, and surface functions are compromised, allowing graft-like fusions between organs. This chain is Putative receptor protein kinase CRINKLY4 (CR4), found in Zea mays (Maize).